Consider the following 465-residue polypeptide: MATLPAAETWIDGGGGVGADAVNLTASLAAGAATGAVETGWLQLLDQAGNLSSSPSALGLPVASPAPSQPWANLTNQFVQPSWRIALWSLAYGVVVAVAVLGNLIVIWIILAHKRMRTVTNYFLVNLAFSDASMAAFNTLVNFIYALHSEWYFGANYCRFQNFFPITAVFASIYSMTAIAVDRYMAIIDPLKPRLSATATKIVIGSIWILAFLLAFPQCLYSKTKVMPGRTLCFVQWPEGPKQHFTYHIIVIILVYCFPLLIMGITYTIVGITLWGGEIPGDTCDKYHEQLKAKRKVVKMMIIVVMTFAICWLPYHIYFILTAIYQQLNRWKYIQQVYLASFWLAMSSTMYNPIIYCCLNKRFRAGFKRAFRWCPFIKVSSYDELELKTTRFHPNRQSSMYTVTRMESMTVVFDPNDADTTRSSRKKRATPRDPSFNGCSRRNSKSASATSSFISSPYTSVDEYS.

Residues 1–84 (MATLPAAETW…TNQFVQPSWR (84 aa)) lie on the Extracellular side of the membrane. 3 N-linked (GlcNAc...) asparagine glycosylation sites follow: N23, N50, and N73. A helical membrane pass occupies residues 85-107 (IALWSLAYGVVVAVAVLGNLIVI). Over 108–117 (WIILAHKRMR) the chain is Cytoplasmic. The chain crosses the membrane as a helical span at residues 118–139 (TVTNYFLVNLAFSDASMAAFNT). Topologically, residues 140 to 159 (LVNFIYALHSEWYFGANYCR) are extracellular. C158 and C233 form a disulfide bridge. A helical membrane pass occupies residues 160 to 181 (FQNFFPITAVFASIYSMTAIAV). Over 182–201 (DRYMAIIDPLKPRLSATATK) the chain is Cytoplasmic. A helical transmembrane segment spans residues 202–222 (IVIGSIWILAFLLAFPQCLYS). Over 223–245 (KTKVMPGRTLCFVQWPEGPKQHF) the chain is Extracellular. A helical transmembrane segment spans residues 246-270 (TYHIIVIILVYCFPLLIMGITYTIV). At 271-299 (GITLWGGEIPGDTCDKYHEQLKAKRKVVK) the chain is on the cytoplasmic side. Residues 300-321 (MMIIVVMTFAICWLPYHIYFIL) traverse the membrane as a helical segment. Residues 322 to 334 (TAIYQQLNRWKYI) are Extracellular-facing. Residues 335–359 (QQVYLASFWLAMSSTMYNPIIYCCL) traverse the membrane as a helical segment. The Cytoplasmic portion of the chain corresponds to 360-465 (NKRFRAGFKR…SPYTSVDEYS (106 aa)). A lipid anchor (S-palmitoyl cysteine) is attached at C374. Positions 415–465 (PNDADTTRSSRKKRATPRDPSFNGCSRRNSKSASATSSFISSPYTSVDEYS) are disordered. Positions 445–465 (KSASATSSFISSPYTSVDEYS) are enriched in low complexity.

It belongs to the G-protein coupled receptor 1 family. The anchoring of this receptor to the plasma membrane is probably mediated by the palmitoylation of a cysteine residue.

It is found in the cell membrane. In terms of biological role, this is a receptor for the tachykinin neuropeptide neuromedin-K (neurokinin B). It is associated with G proteins that activate a phosphatidylinositol-calcium second messenger system. The rank order of affinity of this receptor to tachykinins is: neuromedin-K &gt; substance K &gt; substance P. The polypeptide is Neuromedin-K receptor (TACR3) (Homo sapiens (Human)).